The sequence spans 180 residues: ATP-dependent protease subunit HslV (180 aa).

The active site involves Thr5. Positions 165, 168, and 171 each coordinate Na(+).

The protein belongs to the peptidase T1B family. HslV subfamily. A double ring-shaped homohexamer of HslV is capped on each side by a ring-shaped HslU homohexamer. The assembly of the HslU/HslV complex is dependent on binding of ATP.

The protein resides in the cytoplasm. The catalysed reaction is ATP-dependent cleavage of peptide bonds with broad specificity.. Allosterically activated by HslU binding. Protease subunit of a proteasome-like degradation complex believed to be a general protein degrading machinery. This Helicobacter pylori (strain G27) protein is ATP-dependent protease subunit HslV.